Consider the following 389-residue polypeptide: Succinate--CoA ligase [ADP-forming] subunit beta (389 aa).

The region spanning 9–244 is the ATP-grasp domain; that stretch reads KQILRKYGIP…PSQMSNNEAR (236 aa). ATP-binding positions include Lys46, 53–55, Ile102, and Glu107; that span reads GRG. The Mg(2+) site is built by Asn199 and Asp213. Substrate contacts are provided by residues Asn264 and 321–323; that span reads GIM.

The protein belongs to the succinate/malate CoA ligase beta subunit family. Heterotetramer of two alpha and two beta subunits. Mg(2+) is required as a cofactor.

The catalysed reaction is succinate + ATP + CoA = succinyl-CoA + ADP + phosphate. It catalyses the reaction GTP + succinate + CoA = succinyl-CoA + GDP + phosphate. It participates in carbohydrate metabolism; tricarboxylic acid cycle; succinate from succinyl-CoA (ligase route): step 1/1. In terms of biological role, succinyl-CoA synthetase functions in the citric acid cycle (TCA), coupling the hydrolysis of succinyl-CoA to the synthesis of either ATP or GTP and thus represents the only step of substrate-level phosphorylation in the TCA. The beta subunit provides nucleotide specificity of the enzyme and binds the substrate succinate, while the binding sites for coenzyme A and phosphate are found in the alpha subunit. The protein is Succinate--CoA ligase [ADP-forming] subunit beta of Protochlamydia amoebophila (strain UWE25).